The following is a 345-amino-acid chain: Dihydroorotate dehydrogenase (quinone) (345 aa).

FMN is bound by residues 65 to 69 (AGLDK) and T89. K69 is a substrate binding site. 114-118 (NRMGF) is a substrate binding site. FMN contacts are provided by N142 and N175. Substrate is bound at residue N175. The active-site Nucleophile is the S178. Substrate is bound at residue N180. FMN-binding residues include K220 and T248. Residue 249 to 250 (NT) participates in substrate binding. FMN-binding positions include G271, G300, and 321–322 (YT).

This sequence belongs to the dihydroorotate dehydrogenase family. Type 2 subfamily. Monomer. Requires FMN as cofactor.

Its subcellular location is the cell membrane. It catalyses the reaction (S)-dihydroorotate + a quinone = orotate + a quinol. It functions in the pathway pyrimidine metabolism; UMP biosynthesis via de novo pathway; orotate from (S)-dihydroorotate (quinone route): step 1/1. Functionally, catalyzes the conversion of dihydroorotate to orotate with quinone as electron acceptor. This chain is Dihydroorotate dehydrogenase (quinone), found in Burkholderia cenocepacia (strain HI2424).